A 53-amino-acid polypeptide reads, in one-letter code: Lantibiotic mutacin-2 (53 aa).

The propeptide occupies M1–G26. Positions T36 to C41 form a cross-link, beta-methyllanthionine (Thr-Cys). Cross-links (lanthionine (Ser-Cys)) lie at residues S38–C52 and S45–C53. T51 carries the post-translational modification 2,3-didehydrobutyrine.

In terms of processing, maturation of lantibiotics involves the enzymatic conversion of Thr, and Ser into dehydrated AA and the formation of thioether bonds with cysteine. This is followed by membrane translocation and cleavage of the modified precursor. It is not established whether the 2,3-didehydrobutyrine is the E- or Z-isomer.

In terms of biological role, lanthionine-containing peptide antibiotic (lantibiotic) active on Gram-positive bacteria including M.luteus, S.aureus, Streptococcus, P.micros, P.acidilactici, C.sporogenes, C.diphtheriae, A.viscosus, G.vaginalis, P.acnes, L.monocytogenes and M.smegmatis, and Gram-negative bacteria including C.jejuni, H.pylori and N.gonorrhoeae. Transiently and partially depolarizes the transmembrane electrical potential and pH gradient of susceptible cells, inhibits the uptake of amino acids and depletes the intracellular ATP pool. The sequence is that of Lantibiotic mutacin-2 from Streptococcus mutans.